Reading from the N-terminus, the 308-residue chain is Testis-specific Y-encoded protein 1 (308 aa).

This sequence belongs to the nucleosome assembly protein (NAP) family. In terms of processing, phosphorylated. In terms of tissue distribution, specifically expressed in testicular tissues. Isoform 1 and isoform 2 are expressed in spermatogonia and spermatocytes. Found in early testicular carcinoma in situ, spermatogonial cells in testicular tissues of 46,X,Y female and in prostate cancer cell lines.

The protein resides in the cytoplasm. It localises to the nucleus. Functionally, may be involved in sperm differentiation and proliferation. This chain is Testis-specific Y-encoded protein 1 (TSPY1), found in Homo sapiens (Human).